A 231-amino-acid polypeptide reads, in one-letter code: 2,3-bisphosphoglycerate-dependent phosphoglycerate mutase (231 aa).

Residues 10 to 17 (RHGQSEWN), 23 to 24 (TG), arginine 62, 89 to 92 (ERHY), lysine 100, 116 to 117 (RR), and 185 to 186 (GN) each bind substrate. Histidine 11 functions as the Tele-phosphohistidine intermediate in the catalytic mechanism. Residue glutamate 89 is the Proton donor/acceptor of the active site.

Belongs to the phosphoglycerate mutase family. BPG-dependent PGAM subfamily. Homodimer.

It carries out the reaction (2R)-2-phosphoglycerate = (2R)-3-phosphoglycerate. It functions in the pathway carbohydrate degradation; glycolysis; pyruvate from D-glyceraldehyde 3-phosphate: step 3/5. Catalyzes the interconversion of 2-phosphoglycerate and 3-phosphoglycerate. This Buchnera aphidicola subsp. Acyrthosiphon pisum (strain APS) (Acyrthosiphon pisum symbiotic bacterium) protein is 2,3-bisphosphoglycerate-dependent phosphoglycerate mutase.